The chain runs to 539 residues: Eukaryotic translation initiation factor 3 subunit L (539 aa).

Positions 302–514 constitute a PCI domain; sequence TFSSILLYIQ…IHIADTKVSH (213 aa).

This sequence belongs to the eIF-3 subunit L family. Component of the eukaryotic translation initiation factor 3 (eIF-3) complex.

It is found in the cytoplasm. Component of the eukaryotic translation initiation factor 3 (eIF-3) complex, which is involved in protein synthesis of a specialized repertoire of mRNAs and, together with other initiation factors, stimulates binding of mRNA and methionyl-tRNAi to the 40S ribosome. The eIF-3 complex specifically targets and initiates translation of a subset of mRNAs involved in cell proliferation. The polypeptide is Eukaryotic translation initiation factor 3 subunit L (Anopheles gambiae (African malaria mosquito)).